The following is a 160-amino-acid chain: Single-stranded DNA-binding protein 3 (160 aa).

Positions 2–104 (MNRVVLVGRL…IVAESVQFLE (103 aa)) constitute an SSB domain. The segment covering 106–133 (KQNGAGGSTSNNNQSETNYSNDNKTSSY) has biased composition (polar residues). The interval 106–160 (KQNGAGGSTSNNNQSETNYSNDNKTSSYRADRSQNGDSFANEGAPVDINPDDLPF) is disordered.

As to quaternary structure, homotetramer.

The sequence is that of Single-stranded DNA-binding protein 3 (ssb3) from Listeria innocua serovar 6a (strain ATCC BAA-680 / CLIP 11262).